A 187-amino-acid polypeptide reads, in one-letter code: Large ribosomal subunit protein uL22 (187 aa).

This sequence belongs to the universal ribosomal protein uL22 family.

The chain is Large ribosomal subunit protein uL22 (RPL17) from Theileria parva (East coast fever infection agent).